The sequence spans 82 residues: Small ribosomal subunit protein uS17 (82 aa).

Belongs to the universal ribosomal protein uS17 family. As to quaternary structure, part of the 30S ribosomal subunit.

Functionally, one of the primary rRNA binding proteins, it binds specifically to the 5'-end of 16S ribosomal RNA. The chain is Small ribosomal subunit protein uS17 from Shewanella pealeana (strain ATCC 700345 / ANG-SQ1).